The following is a 69-amino-acid chain: ATP synthase subunits region ORF 1 (69 aa).

The polypeptide is ATP synthase subunits region ORF 1 (Fuscovulum blasticum (Rhodobacter blasticus)).